Here is a 343-residue protein sequence, read N- to C-terminus: L-threonine 3-dehydrogenase (343 aa).

Position 40 (Cys40) interacts with Zn(2+). Active-site charge relay system residues include Thr42 and His45. Zn(2+) contacts are provided by His65, Glu66, Cys95, Cys98, Cys101, and Cys109. Residues Ile177, Asp197, Arg202, 264-266, and 288-289 contribute to the NAD(+) site; these read LGI and IY.

This sequence belongs to the zinc-containing alcohol dehydrogenase family. Homotetramer. The cofactor is Zn(2+).

The protein resides in the cytoplasm. The enzyme catalyses L-threonine + NAD(+) = (2S)-2-amino-3-oxobutanoate + NADH + H(+). The protein operates within amino-acid degradation; L-threonine degradation via oxydo-reductase pathway; glycine from L-threonine: step 1/2. Catalyzes the NAD(+)-dependent oxidation of L-threonine to 2-amino-3-ketobutyrate. The sequence is that of L-threonine 3-dehydrogenase from Aliivibrio fischeri (strain ATCC 700601 / ES114) (Vibrio fischeri).